Reading from the N-terminus, the 364-residue chain is Tyrosine--tRNA ligase (364 aa).

Tyr-39 contributes to the L-tyrosine binding site. ATP contacts are provided by His-49 and Trp-52. L-tyrosine-binding residues include Tyr-165, Gln-169, Asp-172, and Gln-187. Positions 238-242 (KMSKS) match the 'KMSKS' region motif. Lys-241 serves as a coordination point for ATP.

It belongs to the class-I aminoacyl-tRNA synthetase family. TyrS type 4 subfamily. As to quaternary structure, homodimer.

It is found in the cytoplasm. It carries out the reaction tRNA(Tyr) + L-tyrosine + ATP = L-tyrosyl-tRNA(Tyr) + AMP + diphosphate + H(+). Catalyzes the attachment of tyrosine to tRNA(Tyr) in a two-step reaction: tyrosine is first activated by ATP to form Tyr-AMP and then transferred to the acceptor end of tRNA(Tyr). The chain is Tyrosine--tRNA ligase from Aeropyrum pernix (strain ATCC 700893 / DSM 11879 / JCM 9820 / NBRC 100138 / K1).